Consider the following 389-residue polypeptide: Na(+)/H(+) antiporter NhaA 1 (389 aa).

Transmembrane regions (helical) follow at residues 12-32 (VLNEAFGGVLLIVCTLLALLV), 62-82 (FLLWINDGLISIFFFAIGLEL), 97-117 (IVLPFMAALGGILIPAMLFAL), 128-148 (GWAIPTATDTAFALAILMMCG), 157-177 (IFLLSLAIFDDVGAILIIAIF), 184-204 (IAAFVIAGLAILVMLILNLLG), 220-240 (ISVLKSGVHATLAGIVTAFFI), 260-280 (FWIAFIILPLFAFANAGVNLS), 282-302 (IDIGAIFSGVSIGIFLGLFVG), 331-351 (LYGVCILTGIGFTMSLFIDGL), and 365-385 (LAILIASFCSGIWGFIYLKFF).

The protein belongs to the NhaA Na(+)/H(+) (TC 2.A.33) antiporter family.

It localises to the cell inner membrane. It catalyses the reaction Na(+)(in) + 2 H(+)(out) = Na(+)(out) + 2 H(+)(in). Na(+)/H(+) antiporter that extrudes sodium in exchange for external protons. This Campylobacter jejuni subsp. jejuni serotype O:2 (strain ATCC 700819 / NCTC 11168) protein is Na(+)/H(+) antiporter NhaA 1.